The following is a 479-amino-acid chain: Oxysterol-binding protein homolog C23B6.01c (479 aa).

Residues Ser328, Ser408, Ser409, and Ser421 each carry the phosphoserine modification. A compositionally biased stretch (basic and acidic residues) spans 404–418; that stretch reads KPEDSSIHKHSRDAS. Positions 404-479 are disordered; sequence KPEDSSIHKH…KLHEEQDPAL (76 aa). The span at 439–452 shows a compositional bias: polar residues; it reads QSTASFVTYRSDNG. Basic and acidic residues predominate over residues 470 to 479; the sequence is KLHEEQDPAL.

It belongs to the OSBP family.

It is found in the cytoplasm. The protein localises to the nucleus. The sequence is that of Oxysterol-binding protein homolog C23B6.01c from Schizosaccharomyces pombe (strain 972 / ATCC 24843) (Fission yeast).